The sequence spans 421 residues: O-glycoside alpha-1,2-mannosyltransferase homolog 5 (421 aa).

The Nucleophile role is filled by E318.

This sequence belongs to the glycosyltransferase 15 family.

The protein resides in the cytoplasm. Functionally, probable mannosyltransferase involved in O-glycosylation of cell wall and secreted proteins. The chain is O-glycoside alpha-1,2-mannosyltransferase homolog 5 (omh5) from Schizosaccharomyces pombe (strain 972 / ATCC 24843) (Fission yeast).